The chain runs to 371 residues: MLVIIRPSGEIALKSPRSRRNFEYTLINNIRNTIGGGKIWRSQGVILLEVNDNNANIEALSEVFGISSFSPVIAIKSNNLEDIVNKAKEIFAEIVKGKIFAVRAKRIGSHSFTSLDVERRAGEALYPYSKGVDLENPEVEIFIEIRNEMTYFYHKVIKGPKGLPVGVAGKTVVLFSGGIDSPVATWMMMKRGSVPIILNFNLGGDLHKELVLKELNMLKRWSGGHKLKIFIVKGTDVFIKLSQVERRSRVVMLKRVMYKTAEKLCEKTNAKSITTGESLSQVSSQTMANLYVTEYGIKYPIFRPLIGFDKEEIVDIARKIGTYKHSIKLPEYCAISTKARTSEDLNEILKNEERLNVDYEKILENSEVIEL.

Residues 54–156 (NANIEALSEV…NEMTYFYHKV (103 aa)) form the THUMP domain. Residues 174 to 175 (LF), 199 to 200 (NF), lysine 254, glycine 276, and glutamine 285 each bind ATP.

Belongs to the ThiI family.

The protein localises to the cytoplasm. It carries out the reaction [ThiI sulfur-carrier protein]-S-sulfanyl-L-cysteine + a uridine in tRNA + 2 reduced [2Fe-2S]-[ferredoxin] + ATP + H(+) = [ThiI sulfur-carrier protein]-L-cysteine + a 4-thiouridine in tRNA + 2 oxidized [2Fe-2S]-[ferredoxin] + AMP + diphosphate. The enzyme catalyses [ThiS sulfur-carrier protein]-C-terminal Gly-Gly-AMP + S-sulfanyl-L-cysteinyl-[cysteine desulfurase] + AH2 = [ThiS sulfur-carrier protein]-C-terminal-Gly-aminoethanethioate + L-cysteinyl-[cysteine desulfurase] + A + AMP + 2 H(+). It participates in cofactor biosynthesis; thiamine diphosphate biosynthesis. In terms of biological role, catalyzes the ATP-dependent transfer of a sulfur to tRNA to produce 4-thiouridine in position 8 of tRNAs, which functions as a near-UV photosensor. Also catalyzes the transfer of sulfur to the sulfur carrier protein ThiS, forming ThiS-thiocarboxylate. This is a step in the synthesis of thiazole, in the thiamine biosynthesis pathway. The sulfur is donated as persulfide by IscS. In Saccharolobus solfataricus (strain ATCC 35092 / DSM 1617 / JCM 11322 / P2) (Sulfolobus solfataricus), this protein is Probable tRNA sulfurtransferase.